Reading from the N-terminus, the 187-residue chain is UPF0301 protein Spro_4027 (187 aa).

Belongs to the UPF0301 (AlgH) family.

The chain is UPF0301 protein Spro_4027 from Serratia proteamaculans (strain 568).